The sequence spans 53 residues: Mannose/glucose-specific lectin alpha chain (53 aa).

It belongs to the leguminous lectin family. In terms of assembly, heterodimer of an alpha and a beta chain.

Its function is as follows. This lectin specifically binds mannose and glucose. The sequence is that of Mannose/glucose-specific lectin alpha chain from Vicia cracca (Bird vetch).